The chain runs to 311 residues: Probable acetylxylan esterase A (311 aa).

Residues M1–A19 form the signal peptide. Residue S153 is the Charge relay system of the active site. N-linked (GlcNAc...) asparagine glycosylation is found at N197 and N224.

The protein belongs to the carbohydrate esterase 1 (CE1) family. AxeA subfamily. Monomer.

The protein localises to the secreted. The catalysed reaction is Deacetylation of xylans and xylo-oligosaccharides.. It functions in the pathway glycan degradation; xylan degradation. Acetylxylan esterase involved in the hydrolysis of xylan, a major structural heterogeneous polysaccharide found in plant biomass representing the second most abundant polysaccharide in the biosphere, after cellulose. Degrades acetylated xylans by cleaving acetyl side groups from the hetero-xylan backbone. The polypeptide is Probable acetylxylan esterase A (axeA) (Aspergillus terreus (strain NIH 2624 / FGSC A1156)).